The chain runs to 258 residues: uncharacterized protein (258 aa).

The N-terminal stretch at Met-1–Ser-19 is a signal peptide. The next 3 helical transmembrane spans lie at Gly-94–Gly-114, Cys-197–Ile-217, and Pro-219–Val-239.

It is found in the membrane. This is an uncharacterized protein from Homo sapiens (Human).